The primary structure comprises 156 residues: SsrA-binding protein (156 aa).

Belongs to the SmpB family.

It is found in the cytoplasm. Functionally, required for rescue of stalled ribosomes mediated by trans-translation. Binds to transfer-messenger RNA (tmRNA), required for stable association of tmRNA with ribosomes. tmRNA and SmpB together mimic tRNA shape, replacing the anticodon stem-loop with SmpB. tmRNA is encoded by the ssrA gene; the 2 termini fold to resemble tRNA(Ala) and it encodes a 'tag peptide', a short internal open reading frame. During trans-translation Ala-aminoacylated tmRNA acts like a tRNA, entering the A-site of stalled ribosomes, displacing the stalled mRNA. The ribosome then switches to translate the ORF on the tmRNA; the nascent peptide is terminated with the 'tag peptide' encoded by the tmRNA and targeted for degradation. The ribosome is freed to recommence translation, which seems to be the essential function of trans-translation. This chain is SsrA-binding protein, found in Staphylococcus carnosus (strain TM300).